The chain runs to 843 residues: Protein P (843 aa).

The terminal protein domain (TP) stretch occupies residues 1 to 177; that stretch reads MPLSYQHFRK…FCGSPYSWEQ (177 aa). Residues 178–346 form a spacer region; sequence ELQHGRLVLQ…HCLFHIVNLI (169 aa). Disordered regions lie at residues 221 to 240 and 289 to 315; these read SRLG…QGGS and VSTS…SRSQ. The span at 223–235 shows a compositional bias: low complexity; that stretch reads LGPQPTQGQLAGL. Residues 347-690 are polymerase/reverse transcriptase domain (RT); it reads DDWGPCAEHG…YLNLYPVARQ (344 aa). The Reverse transcriptase domain maps to 357-600; the sequence is EHRIRTPRTP…YSLNFMGYVI (244 aa). The Mg(2+) site is built by Asp-429, Asp-551, and Asp-552.

It belongs to the hepadnaviridae P protein family.

It carries out the reaction DNA(n) + a 2'-deoxyribonucleoside 5'-triphosphate = DNA(n+1) + diphosphate. It catalyses the reaction Endonucleolytic cleavage to 5'-phosphomonoester.. With respect to regulation, activated by host HSP70 and HSP40 in vitro to be able to bind the epsilon loop of the pgRNA. Because deletion of the RNase H region renders the protein partly chaperone-independent, the chaperones may be needed indirectly to relieve occlusion of the RNA-binding site by this domain. Inhibited by several reverse-transcriptase inhibitors: Lamivudine, Adefovir and Entecavir. Functionally, multifunctional enzyme that converts the viral RNA genome into dsDNA in viral cytoplasmic capsids. This enzyme displays a DNA polymerase activity that can copy either DNA or RNA templates, and a ribonuclease H (RNase H) activity that cleaves the RNA strand of RNA-DNA heteroduplexes in a partially processive 3'- to 5'-endonucleasic mode. Neo-synthesized pregenomic RNA (pgRNA) are encapsidated together with the P protein, and reverse-transcribed inside the nucleocapsid. Initiation of reverse-transcription occurs first by binding the epsilon loop on the pgRNA genome, and is initiated by protein priming, thereby the 5'-end of (-)DNA is covalently linked to P protein. Partial (+)DNA is synthesized from the (-)DNA template and generates the relaxed circular DNA (RC-DNA) genome. After budding and infection, the RC-DNA migrates in the nucleus, and is converted into a plasmid-like covalently closed circular DNA (cccDNA). The activity of P protein does not seem to be necessary for cccDNA generation, and is presumably released from (+)DNA by host nuclear DNA repair machinery. The sequence is that of Protein P from Homo sapiens (Human).